The primary structure comprises 459 residues: MSHGRMNLALSLVFILCGLFNSIFCEKQQHSQKHMNLVLLKKISALSQKMEAHPKDFAQELFKALIIEDPRKNIIFSPMAMTTTLATLSLGIKSTMRTHHPEDLKLEPKLLDVHKYLQPLVHVGRELVKQKVLKHQHILFINRKMMVNQMLLQQISKLQGMDIQMIDFTDIEKAKKTISHHVAEKTHTKITNLITDLNPETILCLVNHIFFKGILKRAFQPKLTQKEVFFVNDQTKVQVDMMRKTERMLYSRSEELHATMVKMPCKGNVSLTLMLPDAGQFDTDLKKMTAKRAKLQKISDFRLVRLILPKLKISFKINFKHLLPKIDPKHILTATAISQAITSKAPLPNLEALHQAEIELSEHALTVDTAIHTDNLLKVPVKAKEVPAVVKVPMKAKEVPAVVKVPMNTKEVPVVVKVPMNTKEVPVVVKVNRPFLLFVEDEKTQRDLFVGKVLNPQVE.

The N-terminal stretch at 1-25 is a signal peptide; it reads MSHGRMNLALSLVFILCGLFNSIFC. A glycan (N-linked (GlcNAc...) asparagine) is linked at Asn268.

This sequence belongs to the serpin family. UTMP subfamily.

The sequence is that of Uterine milk protein from Bos taurus (Bovine).